Consider the following 346-residue polypeptide: Phosphoribosylformylglycinamidine cyclo-ligase (346 aa).

It belongs to the AIR synthase family.

The protein resides in the cytoplasm. The catalysed reaction is 2-formamido-N(1)-(5-O-phospho-beta-D-ribosyl)acetamidine + ATP = 5-amino-1-(5-phospho-beta-D-ribosyl)imidazole + ADP + phosphate + H(+). Its pathway is purine metabolism; IMP biosynthesis via de novo pathway; 5-amino-1-(5-phospho-D-ribosyl)imidazole from N(2)-formyl-N(1)-(5-phospho-D-ribosyl)glycinamide: step 2/2. This chain is Phosphoribosylformylglycinamidine cyclo-ligase, found in Brevibacillus brevis (strain 47 / JCM 6285 / NBRC 100599).